The following is a 304-amino-acid chain: N-carbamoyl-D-amino acid hydrolase (304 aa).

Positions 5-276 (MILAVGQQGP…DEVITAAVDL (272 aa)) constitute a CN hydrolase domain. Active-site residues include E47, K127, and C172.

Homotetramer.

The catalysed reaction is an N-carbamoyl-D-amino acid + H2O + 2 H(+) = a D-alpha-amino acid + NH4(+) + CO2. Its function is as follows. The enzyme catalyzes the hydrolysis of N-carbamoyl-D-amino acids to the corresponding which are useful intermediates in the preparation of beta-lactam antibiotics. Industrial production of beta-lactam antibiotics is now being developed using this enzyme. This chain is N-carbamoyl-D-amino acid hydrolase, found in Rhizobium radiobacter (Agrobacterium tumefaciens).